The sequence spans 551 residues: Podocalyxin (551 aa).

A signal peptide spans 1–21 (MRSALALAALLLLLLSPPSLS). A disordered region spans residues 18 to 324 (PSLSQEKSPQ…QRVSCGPPER (307 aa)). The Extracellular segment spans residues 22 to 452 (QEKSPQPGPT…PPEETEDRFS (431 aa)). Low complexity predominate over residues 32-59 (PMATSTSTRPAPASAPAPKSSVAASVPA). The span at 60–90 (EQNTTPMTTKAPATQSPSASPGSSVENSAPA) shows a compositional bias: polar residues. A compositionally biased stretch (low complexity) spans 91–104 (QGSTTTQQSLSVTT). Positions 142-164 (APSNHSITTKPLATEATSQAPRQ) are enriched in polar residues. Residues Asn-145 and Asn-180 are each glycosylated (N-linked (GlcNAc...) asparagine). Positions 234 to 244 (PVASSAETQGM) are enriched in polar residues. Low complexity predominate over residues 289–300 (TSSSTELASTAL). A glycan (N-linked (GlcNAc...) asparagine) is linked at Asn-333. The helical transmembrane segment at 453-473 (LPLIITIVCMASFLLLVAALY) threads the bilayer. The Cytoplasmic segment spans residues 474–551 (GCCHQRLSHR…DLDEEEDTHL (78 aa)). At Thr-511 the chain carries Phosphothreonine. Ser-530 carries the post-translational modification Phosphoserine. Thr-549 is subject to Phosphothreonine.

It belongs to the podocalyxin family. In terms of assembly, monomer; when associated with the membrane raft. Oligomer; when integrated in the apical membrane. Found in a complex with EZR, PODXL and NHERF2. Associates with the actin cytoskeleton through complex formation with EZR and NHERF2. Interacts (via the C-terminal PDZ-binding motif DTHL) with NHERF1 (via the PDZ domains); interaction is not detected in glomerular epithelium cells, take place early in the secretory pathway and is necessary for its apical membrane sorting. Interacts (via the C-terminal PDZ-binding motif DTHL) with NHERF2 (via the PDZ 1 domain); interaction is detected in glomerular epithelium cells. Interacts with EZR. Post-translationally, N- and O-linked glycosylated. Sialoglycoprotein. In terms of tissue distribution, glomerular epithelium cell (podocyte) and endothelial cells.

It localises to the apical cell membrane. Its subcellular location is the cell projection. It is found in the microvillus. The protein localises to the membrane raft. The protein resides in the lamellipodium. It localises to the filopodium. Its subcellular location is the ruffle. It is found in the membrane. Its function is as follows. Involved in the regulation of both adhesion and cell morphology and cancer progression. Functions as an anti-adhesive molecule that maintains an open filtration pathway between neighboring foot processes in the podocyte by charge repulsion. Acts as a pro-adhesive molecule, enhancing the adherence of cells to immobilized ligands, increasing the rate of migration and cell-cell contacts in an integrin-dependent manner. Induces the formation of apical actin-dependent microvilli. Involved in the formation of a preapical plasma membrane subdomain to set up initial epithelial polarization and the apical lumen formation during renal tubulogenesis. Plays a role in cancer development and aggressiveness by inducing cell migration and invasion through its interaction with the actin-binding protein EZR. Affects EZR-dependent signaling events, leading to increased activities of the MAPK and PI3K pathways in cancer cells. The sequence is that of Podocalyxin (PODXL) from Oryctolagus cuniculus (Rabbit).